Reading from the N-terminus, the 189-residue chain is UPF0398 protein LGAS_1023 (189 aa).

This sequence belongs to the UPF0398 family.

In Lactobacillus gasseri (strain ATCC 33323 / DSM 20243 / BCRC 14619 / CIP 102991 / JCM 1131 / KCTC 3163 / NCIMB 11718 / NCTC 13722 / AM63), this protein is UPF0398 protein LGAS_1023.